The chain runs to 248 residues: 3-deoxy-manno-octulosonate cytidylyltransferase (248 aa).

The protein belongs to the KdsB family.

The protein resides in the cytoplasm. The enzyme catalyses 3-deoxy-alpha-D-manno-oct-2-ulosonate + CTP = CMP-3-deoxy-beta-D-manno-octulosonate + diphosphate. Its pathway is nucleotide-sugar biosynthesis; CMP-3-deoxy-D-manno-octulosonate biosynthesis; CMP-3-deoxy-D-manno-octulosonate from 3-deoxy-D-manno-octulosonate and CTP: step 1/1. It functions in the pathway bacterial outer membrane biogenesis; lipopolysaccharide biosynthesis. Activates KDO (a required 8-carbon sugar) for incorporation into bacterial lipopolysaccharide in Gram-negative bacteria. The chain is 3-deoxy-manno-octulosonate cytidylyltransferase from Escherichia fergusonii (strain ATCC 35469 / DSM 13698 / CCUG 18766 / IAM 14443 / JCM 21226 / LMG 7866 / NBRC 102419 / NCTC 12128 / CDC 0568-73).